The chain runs to 640 residues: Chaperone protein DnaK (640 aa).

A Phosphothreonine; by autocatalysis modification is found at threonine 196. Positions 547–569 are enriched in basic and acidic residues; it reads GDKIPSDKRPALEGALEKLKDAT. 2 disordered regions span residues 547-575 and 595-640; these read GDKI…GTTE and LYQA…GNGK. Positions 603–615 are enriched in polar residues; it reads TNASEPTQNTDGS. Positions 625 to 634 are enriched in acidic residues; the sequence is GEVENAEFEV.

The protein belongs to the heat shock protein 70 family.

Functionally, acts as a chaperone. The polypeptide is Chaperone protein DnaK (Chlorobium phaeobacteroides (strain DSM 266 / SMG 266 / 2430)).